Here is a 640-residue protein sequence, read N- to C-terminus: MSIRKQARLEAKQFIDSLTVQPFPNSQKVYVQGSRADIQVPMREISLADSLVGGSKKAPILEPNEPIRVYDTSGFYTDPNQPVNIYDGLEKVRSGWIEERGDTVLLEQSNSVYTKERLSDETLDELRFDARIQARQAVEGHCVTQLHYARKGIVTPEMEYIAIRENMGRAKYADEELNQQHPGINFGANLPPEITPEFVRKEVAEGRAIIPANINHPESEPMIIGRNFLVKVNANIGNSAVSSSIEEEVEKLVWSIRWGGDTVMDLSTGRNIHETREWIIRNSPVPIGTVPMYQALEKVNGVAENLNWDVFRDTLLEQAEQGVDYFTIHAGVLLRYVPMTAKRVTGIVSRGGSIMAKWCLAHHEESFLYMHFREICEICAQYDISLSLGDGLRPGSVADANDEAQFSELRTLGELTKIAWEYDVQVMIEGPGHVPMHMIKENMDEQLKHCHEAPFYTLGPLTTDIAPGYDHITSGIGAAIIGWYGCAMLCYVTPKEHLGLPNKDDVKVGLITYKLCAHAADLAKGHPGAQVRDNALSKARFEFRWEDQFNLGLDPDTARAYHDETLPQESGKVAHFCSMCGPKFCSMKISQEVRDYAKGLEENGDIAIKLLDNPLEGMQQKSDEFRSRGSELYHPVQEEI.

Substrate contacts are provided by residues N235, M264, Y293, H329, 349–351 (SRG), 390–393 (DGLR), and E429. Zn(2+) is bound at residue H433. Y456 lines the substrate pocket. H497 contacts Zn(2+). C577, C580, and C585 together coordinate [4Fe-4S] cluster.

It belongs to the ThiC family. Homodimer. The cofactor is [4Fe-4S] cluster.

The enzyme catalyses 5-amino-1-(5-phospho-beta-D-ribosyl)imidazole + S-adenosyl-L-methionine = 4-amino-2-methyl-5-(phosphooxymethyl)pyrimidine + CO + 5'-deoxyadenosine + formate + L-methionine + 3 H(+). It participates in cofactor biosynthesis; thiamine diphosphate biosynthesis. Functionally, catalyzes the synthesis of the hydroxymethylpyrimidine phosphate (HMP-P) moiety of thiamine from aminoimidazole ribotide (AIR) in a radical S-adenosyl-L-methionine (SAM)-dependent reaction. The sequence is that of Phosphomethylpyrimidine synthase from Photobacterium profundum (strain SS9).